The sequence spans 686 residues: Glycine--tRNA ligase beta subunit (686 aa).

It belongs to the class-II aminoacyl-tRNA synthetase family. As to quaternary structure, tetramer of two alpha and two beta subunits.

It is found in the cytoplasm. It carries out the reaction tRNA(Gly) + glycine + ATP = glycyl-tRNA(Gly) + AMP + diphosphate. This Geobacter metallireducens (strain ATCC 53774 / DSM 7210 / GS-15) protein is Glycine--tRNA ligase beta subunit.